The sequence spans 179 residues: Large ribosomal subunit protein uL5 (179 aa).

This sequence belongs to the universal ribosomal protein uL5 family. As to quaternary structure, part of the 50S ribosomal subunit; part of the 5S rRNA/L5/L18/L25 subcomplex. Contacts the 5S rRNA and the P site tRNA. Forms a bridge to the 30S subunit in the 70S ribosome.

Functionally, this is one of the proteins that bind and probably mediate the attachment of the 5S RNA into the large ribosomal subunit, where it forms part of the central protuberance. In the 70S ribosome it contacts protein S13 of the 30S subunit (bridge B1b), connecting the 2 subunits; this bridge is implicated in subunit movement. Contacts the P site tRNA; the 5S rRNA and some of its associated proteins might help stabilize positioning of ribosome-bound tRNAs. The polypeptide is Large ribosomal subunit protein uL5 (Neisseria meningitidis serogroup A / serotype 4A (strain DSM 15465 / Z2491)).